The sequence spans 294 residues: Nucleotide-binding protein CLJ_B3680 (294 aa).

8–15 is a binding site for ATP; it reads GLSGAGKT. GTP is bound at residue 59 to 62; sequence DIRG.

Belongs to the RapZ-like family.

Functionally, displays ATPase and GTPase activities. The protein is Nucleotide-binding protein CLJ_B3680 of Clostridium botulinum (strain 657 / Type Ba4).